Consider the following 479-residue polypeptide: Neuronal acetylcholine receptor subunit alpha-9 (479 aa).

Residues 1-25 form the signal peptide; that stretch reads MNRPHSCLSFCWMYFAASGIRAVET. Residues 26 to 237 lie on the Extracellular side of the membrane; that stretch reads ANGKYAQKLF…TFTLLLKRRS (212 aa). Residue Asn57 is glycosylated (N-linked (GlcNAc...) asparagine). A disulfide bridge links Cys155 with Cys169. N-linked (GlcNAc...) asparagine glycosylation occurs at Asn170. The Na(+) site is built by Ser191 and Asp193. Residues Cys219 and Cys220 are joined by a disulfide bond. Helical transmembrane passes span 238 to 262, 269 to 287, and 302 to 323; these read SFYIVNLLIPCVLISFLAPLSFYLP, VSLGVTILLAMTVFQLMVA, and YYIATMALITASTALTIMVMNI. At 324–457 the chain is on the cytoplasmic side; sequence HFCGAEARPV…WKKVAKVIDR (134 aa). A helical transmembrane segment spans residues 458–476; sequence FFMWIFFAMVFVMTVLIIA.

Belongs to the ligand-gated ion channel (TC 1.A.9) family. Acetylcholine receptor (TC 1.A.9.1) subfamily. Alpha-9/CHRNA9 sub-subfamily. In terms of assembly, forms homo- or heterooligomeric channels in conjunction with CHRNA10. The native outer hair cell receptor may be composed of CHRNA9:CHRNA10 heterooligomers. Found in the stoichiometric form (CHRNA9)2:(CHRNA10)3. In terms of tissue distribution, detected in the nasal epithelium, in the outer hair cells of the cochlea, in the pars tuberalis of the hypophysis, and in the developing muscle of the tongue. Also expressed in the neurons of dorsal root ganglia.

The protein localises to the synaptic cell membrane. The protein resides in the cell membrane. The enzyme catalyses Ca(2+)(in) = Ca(2+)(out). It catalyses the reaction Mg(2+)(in) = Mg(2+)(out). It carries out the reaction K(+)(in) = K(+)(out). The catalysed reaction is Na(+)(in) = Na(+)(out). Its activity is regulated as follows. Activated by a myriad of ligands such as acetylcholine. AChR activity is inhibited by the antagonist alpha-conotoxins RgIA and GeXXA, small disulfide-constrained peptides from cone snails. Functionally, component of neuronal acetylcholine receptors (nAChRs) that function as pentameric, ligand-gated cation channels with high calcium permeability among other activities. nAChRs are excitatory neurotrasnmitter receptors formed by a collection of nAChR subunits known to mediate synaptic transmission in the nervous system and the neuromuscular junction. Each nAchR subunit confers differential attributes to channel properties, including activation, deactivation and desensitization kinetics, pH sensitivity, cation permeability, and binding to allosteric modulators. Forms either homopentamers or heteropentamers with CHRNA10. Expressed in the inner ear, in sympathetic neurons and in other non-neuronal cells, such as skin keratinocytes and lymphocytes. nAChR formed by CHRNA9:CHRNA10 mediate central nervous system control of auditory and vestibular sensory processing. The channel is permeable to a range of divalent cations including calcium, the influx of which may activate a potassium current which hyperpolarizes the cell membrane. In the ear, mediates synaptic transmission between efferent olivocochlear fibers and hair cells of the cochlea, this may lead to a reduction in basilar membrane motion, altering the activity of auditory nerve fibers and reducing the range of dynamic hearing. This may protect against acoustic trauma. May also regulate keratinocyte adhesion. The polypeptide is Neuronal acetylcholine receptor subunit alpha-9 (Chrna9) (Rattus norvegicus (Rat)).